Here is a 292-residue protein sequence, read N- to C-terminus: E3 ubiquitin-protein ligase RNF144A (292 aa).

The segment at 16–236 is TRIAD supradomain; that stretch reads PLVSCKLCLG…YDKGPCRNKL (221 aa). 14 residues coordinate Zn(2+): Cys-20, Cys-23, Cys-43, Cys-46, Cys-111, Cys-116, Cys-135, Cys-138, Cys-143, Cys-146, His-151, Cys-156, Cys-185, and Cys-188. The segment at 20–70 adopts an RING-type 1 zinc-finger fold; that stretch reads CKLCLGEYPAEQMTTIAQCQCIFCTLCLKQYVELLIKEGLETAISCPDAAC. The segment at 91–156 adopts an IBR-type zinc-finger fold; that stretch reads QRYKKLQFER…KARWHPGQGC (66 aa). Residues 185-214 form an RING-type 2; atypical zinc finger; sequence CPKCRVYIERDEGCAQMMCKNCKHAFCWYC. The active site involves Cys-198. Residues Cys-203, Cys-206, Cys-211, Cys-214, His-226, and Cys-232 each coordinate Zn(2+). Residues 250–270 traverse the membrane as a helical segment; that stretch reads VVGIFAGFGLLLLVASPFLLL.

It belongs to the RBR family. RNF144 subfamily. Self-associates. Interacts with UBE2L3. Post-translationally, autoubiquitinated.

The protein localises to the cell membrane. It is found in the cytoplasmic vesicle membrane. It carries out the reaction [E2 ubiquitin-conjugating enzyme]-S-ubiquitinyl-L-cysteine + [acceptor protein]-L-lysine = [E2 ubiquitin-conjugating enzyme]-L-cysteine + [acceptor protein]-N(6)-ubiquitinyl-L-lysine.. It functions in the pathway protein modification; protein ubiquitination. In terms of biological role, E3 ubiquitin-protein ligase which accepts ubiquitin from E2 ubiquitin-conjugating enzymes UBE2L3 and UBE2L6 in the form of a thioester and then directly transfers the ubiquitin to targeted substrates. Mediates the ubiquitination and degradation of the DNA damage kinase PRKDC during DNA damage. Positively regulates DNA virus or exogenous cytosolic DNA-triggered innate immune response by mediating STING1 ubiquitination and increasing its 'Lys-6'-linked ubiquitination and translocation from the endoplasmic reticulum to the Golgi leading to downstream signaling pathways. Plays a positive role in EGF-dependent cell proliferation by prolonging EGF/EGFR signaling during EGF stimulation through EGFR ubiquitination. Increases ERK activity independently of EGFR signaling by promoting polyubiquitination and subsequent degradation of VRK3 in the cytosol. This is E3 ubiquitin-protein ligase RNF144A (Rnf144a) from Mus musculus (Mouse).